The following is a 153-amino-acid chain: Pheromone-binding protein Gp-9 (153 aa).

Residues Met1–Ala19 form the signal peptide. Cystine bridges form between Cys37–Cys77, Cys73–Cys129, and Cys118–Cys138.

It belongs to the PBP/GOBP family. Homodimer.

It localises to the secreted. In terms of biological role, colony queen number, a major feature of social organization, is associated with worker genotype for Gp-9. Colonies are headed by either a single reproductive queen (monogyne form) or multiple queens (polygyne form). Differences in worker Gp-9 genotypes between social forms may cause differences in workers' abilities to recognize queens and regulate their numbers. This is Pheromone-binding protein Gp-9 from Solenopsis geminata (Tropical fire ant).